Here is a 151-residue protein sequence, read N- to C-terminus: S-protein homolog 74 (151 aa).

The N-terminal stretch at 1–25 is a signal peptide; the sequence is MNYIKQFILAICFYLVLTCQDHVLA.

Belongs to the plant self-incompatibility (S1) protein family.

It localises to the secreted. This is S-protein homolog 74 from Arabidopsis thaliana (Mouse-ear cress).